A 303-amino-acid polypeptide reads, in one-letter code: ATP-dependent (S)-NAD(P)H-hydrate dehydratase (303 aa).

In terms of domain architecture, YjeF C-terminal spans 12-299 (QQQLVCSVIP…AEVRTAFSML (288 aa)). (6S)-NADPHX contacts are provided by residues Gly106 and 158-164 (NAVELDR). Residues 194-198 (KGSED) and 213-222 (GSPRRCGGQG) each bind ATP. Asp223 serves as a coordination point for (6S)-NADPHX.

It belongs to the NnrD/CARKD family. The cofactor is Mg(2+).

The enzyme catalyses (6S)-NADHX + ATP = ADP + phosphate + NADH + H(+). It carries out the reaction (6S)-NADPHX + ATP = ADP + phosphate + NADPH + H(+). Catalyzes the dehydration of the S-form of NAD(P)HX at the expense of ATP, which is converted to ADP. Together with NAD(P)HX epimerase, which catalyzes the epimerization of the S- and R-forms, the enzyme allows the repair of both epimers of NAD(P)HX, a damaged form of NAD(P)H that is a result of enzymatic or heat-dependent hydration. This Ixodes scapularis (Black-legged tick) protein is ATP-dependent (S)-NAD(P)H-hydrate dehydratase.